A 111-amino-acid chain; its full sequence is uncharacterized protein (111 aa).

This is an uncharacterized protein from Ureaplasma parvum serovar 3 (strain ATCC 700970).